The following is a 450-amino-acid chain: mRNA cleavage and polyadenylation factor CLP1 (450 aa).

Residues Glu-29, Lys-67, and 137–142 each bind ATP; that span reads NSGKTS.

This sequence belongs to the Clp1 family. Clp1 subfamily. In terms of assembly, component of a pre-mRNA cleavage factor complex. Interacts directly with PCF11.

Its subcellular location is the nucleus. Required for endonucleolytic cleavage during polyadenylation-dependent pre-mRNA 3'-end formation. This is mRNA cleavage and polyadenylation factor CLP1 from Yarrowia lipolytica (strain CLIB 122 / E 150) (Yeast).